The sequence spans 541 residues: Atlastin (541 aa).

Residues 1-424 (MGGSAVQVIN…NIFKAARTPA (424 aa)) lie on the Cytoplasmic side of the membrane. Positions 35-284 (DRFVCVVSVA…LVPMLLAPDN (250 aa)) constitute a GB1/RHD3-type G domain. GDP contacts are provided by arginine 48, lysine 49, glycine 50, lysine 51, and serine 52. GTP-binding residues include arginine 48, lysine 49, glycine 50, lysine 51, serine 52, and phenylalanine 53. Serine 52 contacts Mg(2+). Aspartate 121 is a Mg(2+) binding site. Arginine 192, aspartate 193, and valine 251 together coordinate GDP. GTP is bound by residues arginine 192, aspartate 193, and valine 251. The tract at residues 322 to 413 (MLVATAEANH…FTNYQAHNES (92 aa)) is 3HB (three-helix bundle) domain. The linker stretch occupies residues 414–422 (KNIFKAART). A helical membrane pass occupies residues 425–445 (VYFACAVIMYILSGIFGLVGL). The Lumenal segment spans residues 446-448 (YTF). A helical transmembrane segment spans residues 449–469 (ANFCNLVMGVALLTLALWAYI). The Cytoplasmic portion of the chain corresponds to 470–541 (RYSGELSDFG…NASNGKVKRS (72 aa)). Threonine 514 carries the phosphothreonine modification.

This sequence belongs to the TRAFAC class dynamin-like GTPase superfamily. GB1/RHD3 GTPase family. GB1 subfamily. As to quaternary structure, monomeric and homodimeric. The homodimer, transiently formed by two molecules on opposing membranes, is the active form mediating ER membrane fusion. Interacts with spas; interaction may regulate microtubule dynamics. In terms of tissue distribution, ubiquitously expressed.

It is found in the endoplasmic reticulum membrane. The protein resides in the golgi apparatus membrane. It carries out the reaction GTP + H2O = GDP + phosphate + H(+). Membrane-anchored GTPase that mediates the GTP-dependent fusion of endoplasmic reticulum (ER) membranes, maintaining the continuous ER network. It facilitates the formation of three-way junctions where ER tubules intersect. Two atlastin-1 on neighboring ER tubules bind GTP and form loose homodimers through the GB1/RHD3-type G domains and 3HB regions. Upon GTP hydrolysis, the 3HB regions tighten, pulling the membranes together to drive their fusion. After fusion, the homodimer disassembles upon release of inorganic phosphate (Pi). Subsequently, GDP dissociates, resetting the monomers to a conformation ready for a new fusion cycle. May also regulate more or less directly Golgi biogenesis. May also regulate microtubule polymerization and Golgi biogenesis. Required for dopaminergic neurons survival and the growth of muscles and synapses at neuromuscular junctions. The polypeptide is Atlastin (atl) (Drosophila melanogaster (Fruit fly)).